Consider the following 103-residue polypeptide: Phorbol-12-myristate-13-acetate-induced protein 1 (103 aa).

Short sequence motifs (BH3) lie at residues 27 to 35 (LRKIGDKVY) and 78 to 86 (LRRIGDKVN). The interval 90-99 (KLLNLISKLF) is required for mitochondrial location.

The protein belongs to the PMAIP1 family. As to quaternary structure, interacts with MCL1. Interacts with BCL2A1. Interacts with BAX. Interacts with BCL2L10. Detected in thymocytes after irradiation with X-rays. Not detectable in untreated thymocytes (at protein level). Detected in embryonic neural precursor cells of the telencephalon Constitutively expressed at low levels in adult brain, testis, thymus, spleen, lung and kidney.

It is found in the mitochondrion. Functionally, promotes activation of caspases and apoptosis. Promotes mitochondrial membrane changes and efflux of apoptogenic proteins from the mitochondria. Contributes to p53/TP53-dependent apoptosis after radiation exposure. Promotes proteasomal degradation of MCL1. Competes with BIM/BCL2L11 for binding to MCL1 and can displace BIM/BCL2L11 from its binding site on MCL1. Competes with BAK1 for binding to MCL1 and can displace BAK1 from its binding site on MCL1. The chain is Phorbol-12-myristate-13-acetate-induced protein 1 (Pmaip1) from Mus musculus (Mouse).